The following is a 555-amino-acid chain: Transcription factor kojR (555 aa).

Residues 21-47 (CETCKLRKRKCDGHEPCTYCLRYEYQC) constitute a DNA-binding region (zn(2)-C6 fungal-type). Residues 51–73 (PHPRRKPAASKSSARPSEEEDSP) form a disordered region.

The protein localises to the nucleus. Functionally, transcription factor that regulates the gene cluster that mediates the biosynthesis of 5-hydroxy-2-hydroxymethyl-1,4-pyrone, also know as kojic acid, a by-product in the fermentation process of malting rice that acts as a chelation agent. Negatively regulates the expression of the kojic acid-related protein kap1. Improves the antioxidant capacity via the accumulation of kojic acid that is also a strong oxidant. The chain is Transcription factor kojR from Aspergillus oryzae (strain ATCC 42149 / RIB 40) (Yellow koji mold).